Consider the following 385-residue polypeptide: Initiation-specific alpha-1,6-mannosyltransferase (385 aa).

At 1-15 (MLQLREPQMVHKHLK) the chain is on the cytoplasmic side. A helical; Signal-anchor for type II membrane protein transmembrane segment spans residues 16 to 36 (LAVLGIVVIFTTYFIISSLSS). At 37 to 385 (PTSTHKTEYN…KDDGMPEMEQ (349 aa)) the chain is on the lumenal side. Residues 189–191 (DID) carry the DXD motif motif.

This sequence belongs to the glycosyltransferase 32 family. It depends on Mn(2+) as a cofactor.

Its subcellular location is the endoplasmic reticulum membrane. It is found in the golgi apparatus membrane. The enzyme catalyses Transfers an alpha-D-mannosyl residue from GDP-mannose into lipid-linked oligosaccharide, forming an alpha-(1-&gt;6)-D-mannosyl-D-mannose linkage.. Mannosyltransferase involved in outer chain elongation of asparagine-linked oligosaccharides of the type Man(9)GlcNAc(2). Adds the first alpha-1,6-mannose to the Man(8)GlcNAc(2) and Man(9)GlcNAc(2), but not Man(5)GlcNAc(2), endoplasmic reticulum intermediates. Represents the first enzymatic event required for synthesis of outer chain mannose linkages on yeast secretory proteins. N-glycan outer chain epitopes play a crucial role in the host-fungal interaction, virulence, and host immune response such as interleukin synthesis or phagocytosis by neutrophils. In Candida albicans (strain SC5314 / ATCC MYA-2876) (Yeast), this protein is Initiation-specific alpha-1,6-mannosyltransferase.